The sequence spans 171 residues: O-acetyl-ADP-ribose deacetylase 1 (171 aa).

The Macro domain maps to 1 to 171; that stretch reads MKKITVIQGD…NYDLYLKLLN (171 aa). Residues 10–11, Asn-24, 32–34, and 121–125 contribute to the substrate site; these read DI, GVD, and STGIY. Asp-34 (proton acceptor) is an active-site residue.

This sequence belongs to the MacroD-type family. YmdB subfamily. As to quaternary structure, homodimer. Interacts with RNase III.

The enzyme catalyses 3''-O-acetyl-ADP-D-ribose + H2O = ADP-D-ribose + acetate + H(+). It catalyses the reaction 2''-O-acetyl-ADP-D-ribose + H2O = ADP-D-ribose + acetate + H(+). Its function is as follows. Deacetylates O-acetyl-ADP ribose to yield ADP-ribose and free acetate. Down-regulates ribonuclease 3 (RNase III) activity. Acts by interacting directly with the region of the ribonuclease that is required for dimerization/activation. The sequence is that of O-acetyl-ADP-ribose deacetylase 1 from Pantoea vagans (strain C9-1) (Pantoea agglomerans (strain C9-1)).